We begin with the raw amino-acid sequence, 568 residues long: Malate synthase, glyoxysomal (568 aa).

The segment at 1-20 (MGSLGMYSESGLTKKGSSRG) is disordered. Catalysis depends on R183, which acts as the Proton acceptor. The Proton donor role is filled by D469. The Microbody targeting signal signature appears at 566–568 (SKL).

The protein belongs to the malate synthase family.

The protein resides in the glyoxysome. The catalysed reaction is glyoxylate + acetyl-CoA + H2O = (S)-malate + CoA + H(+). It functions in the pathway carbohydrate metabolism; glyoxylate cycle; (S)-malate from isocitrate: step 2/2. This chain is Malate synthase, glyoxysomal, found in Cucumis sativus (Cucumber).